Reading from the N-terminus, the 141-residue chain is uncharacterized protein (141 aa).

This is an uncharacterized protein from Borreliella burgdorferi (strain ATCC 35210 / DSM 4680 / CIP 102532 / B31) (Borrelia burgdorferi).